The sequence spans 229 residues: Cell division protein FtsQ (229 aa).

The helical transmembrane segment at 1–21 threads the bilayer; sequence MIVLLCVIFAFLVYSNWHSWL. Over 22–229 the chain is Periplasmic; that stretch reads ESLDRNPIRA…AAVGFSPLPK (208 aa). The POTRA domain maps to 27 to 97; the sequence is NPIRAYALTH…DRLSITLIEH (71 aa).

This sequence belongs to the FtsQ/DivIB family. FtsQ subfamily. Part of a complex composed of FtsB, FtsL and FtsQ.

The protein resides in the cell inner membrane. Essential cell division protein. May link together the upstream cell division proteins, which are predominantly cytoplasmic, with the downstream cell division proteins, which are predominantly periplasmic. May control correct divisome assembly. This Actinobacillus pleuropneumoniae serotype 3 (strain JL03) protein is Cell division protein FtsQ.